The chain runs to 141 residues: ATP synthase epsilon chain (141 aa).

The protein belongs to the ATPase epsilon chain family. In terms of assembly, F-type ATPases have 2 components, CF(1) - the catalytic core - and CF(0) - the membrane proton channel. CF(1) has five subunits: alpha(3), beta(3), gamma(1), delta(1), epsilon(1). CF(0) has three main subunits: a, b and c.

The protein localises to the cell inner membrane. Its function is as follows. Produces ATP from ADP in the presence of a proton gradient across the membrane. The polypeptide is ATP synthase epsilon chain (Teredinibacter turnerae (strain ATCC 39867 / T7901)).